The sequence spans 276 residues: Ice-binding protein (276 aa).

An N-terminal signal peptide occupies residues 1 to 24 (MKILKRIPVLAVLLVGLMTNCSND). The short motif at 79–82 (TGIT) is the Ice-binding site motif (T-A/G-X-T/N) 1 element. Cys-107 and Cys-124 are oxidised to a cystine. Short sequence motifs (ice-binding site motif (T-A/G-X-T/N)) lie at residues 245-248 (TGIN) and 263-266 (TAVT).

It belongs to the ice-binding protein family. In terms of assembly, monomer.

It localises to the secreted. Its function is as follows. Has antifreeze activity for survival in a subzero environment. Binds to the surface of ice crystals and inhibits their growth. Has high thermal hysteresis (TH) activity, which is the ability to lower the freezing point of an aqueous solution below its melting point, and thus the freezing of the cell fluid can be prevented protecting the organism from ice damage. The TH activity of this protein is 2.2 degrees Celsius at 5 uM and 2.5 degrees Celsius at 50 uM. This is Ice-binding protein from Flavobacterium frigoris (strain PS1).